Reading from the N-terminus, the 218-residue chain is MSIGILGKKLGMSQFFDDQGRAIPVTLIEAGPCRITQLKTSEIDGYAAVQIGFGDTREKLINKPSKGHLTKSGEVLLKHLREYRVEGLEGLELGAAITVGSFEAGQKVDVSGDTMGRGFAGYQKRHGFSRGPMSHGSKNHREPGSTGAGTTPGRIYPGKRMAGRYGGKKRTTRGLTILKVDSNRNLLVVKGSVPGKPGALLNIRPAKRVGNKPAQGGK.

The segment at 126-170 (HGFSRGPMSHGSKNHREPGSTGAGTTPGRIYPGKRMAGRYGGKKR) is disordered.

The protein belongs to the universal ribosomal protein uL3 family. As to quaternary structure, part of the 50S ribosomal subunit. Forms a cluster with proteins L14 and L19.

Functionally, one of the primary rRNA binding proteins, it binds directly near the 3'-end of the 23S rRNA, where it nucleates assembly of the 50S subunit. This chain is Large ribosomal subunit protein uL3, found in Prochlorococcus marinus (strain MIT 9313).